The following is a 43-amino-acid chain: Structural protein ORF5a (43 aa).

The chain crosses the membrane as a helical span at residues 2–22 (FSQIGAFLDSALLLLVAFFAV).

The protein belongs to the arteriviridae ORF5a protein family. As to quaternary structure, interacts with proteins GP2B and GP4.

It is found in the virion. It localises to the host cell membrane. Its function is as follows. Minor virion component that plays an essential role in virus infectivity. The protein is Structural protein ORF5a of Sus scrofa (Pig).